Here is a 159-residue protein sequence, read N- to C-terminus: Vesicle transport protein SFT2B (159 aa).

The residue at position 1 (M1) is an N-acetylmethionine. Topologically, residues 1 to 36 (MDKLKKVLSGQDTEDRSGLSEVVEASSLSWGTRIKG) are cytoplasmic. Residue S9 is modified to Phosphoserine. A helical membrane pass occupies residues 37-57 (FIACFALGILCSVLGTLLLWV). Topologically, residues 58-63 (PRKGLG) are lumenal. The chain crosses the membrane as a helical span at residues 64 to 84 (LFAVFYTLGNIMSIGSTVFLM). At 85 to 98 (GPLKQLKRMFEPTR) the chain is on the cytoplasmic side. Residues 99 to 119 (LIATILVLLCFALTLCSAFLW) form a helical membrane-spanning segment. At 120 to 122 (NKG) the chain is on the lumenal side. A helical transmembrane segment spans residues 123–143 (LALIFCILQSLALTWYSLSYI). Over 144-159 (PYARDAVKKCFAVCLA) the chain is Cytoplasmic.

The protein belongs to the SFT2 family.

Its subcellular location is the membrane. Its function is as follows. May be involved in fusion of retrograde transport vesicles derived from an endocytic compartment with the Golgi complex. The sequence is that of Vesicle transport protein SFT2B from Mus musculus (Mouse).